We begin with the raw amino-acid sequence, 421 residues long: UDP-N-acetylglucosamine 1-carboxyvinyltransferase 2 (421 aa).

Residue 22–23 participates in phosphoenolpyruvate binding; that stretch reads KN. UDP-N-acetyl-alpha-D-glucosamine is bound at residue Arg-95. The active-site Proton donor is Cys-119. Cys-119 is subject to 2-(S-cysteinyl)pyruvic acid O-phosphothioketal. Residues 124-128, Asp-308, and Val-330 each bind UDP-N-acetyl-alpha-D-glucosamine; that span reads RPIEQ.

It belongs to the EPSP synthase family. MurA subfamily.

It localises to the cytoplasm. It carries out the reaction phosphoenolpyruvate + UDP-N-acetyl-alpha-D-glucosamine = UDP-N-acetyl-3-O-(1-carboxyvinyl)-alpha-D-glucosamine + phosphate. Its pathway is cell wall biogenesis; peptidoglycan biosynthesis. In terms of biological role, cell wall formation. Adds enolpyruvyl to UDP-N-acetylglucosamine. In Staphylococcus haemolyticus (strain JCSC1435), this protein is UDP-N-acetylglucosamine 1-carboxyvinyltransferase 2.